A 277-amino-acid chain; its full sequence is General transcription factor IIF subunit 2 (277 aa).

The protein belongs to the TFIIF beta subunit family. As to quaternary structure, heterodimer of an alpha and a beta subunit.

The protein resides in the nucleus. TFIIF is a general transcription initiation factor that binds to RNA polymerase II and helps to recruit it to the initiation complex in collaboration with TFIIB. The chain is General transcription factor IIF subunit 2 (TfIIFbeta) from Drosophila melanogaster (Fruit fly).